A 642-amino-acid chain; its full sequence is Threonine--tRNA ligase (642 aa).

The 61-residue stretch at 1-61 (MPVITLPDGS…ETDAELSIIT (61 aa)) folds into the TGS domain. The catalytic stretch occupies residues 243-534 (DHRKIGKQLD…LIEEYAGRFP (292 aa)). 3 residues coordinate Zn(2+): Cys-334, His-385, and His-511.

It belongs to the class-II aminoacyl-tRNA synthetase family. In terms of assembly, homodimer. Zn(2+) is required as a cofactor.

The protein resides in the cytoplasm. It carries out the reaction tRNA(Thr) + L-threonine + ATP = L-threonyl-tRNA(Thr) + AMP + diphosphate + H(+). Functionally, catalyzes the attachment of threonine to tRNA(Thr) in a two-step reaction: L-threonine is first activated by ATP to form Thr-AMP and then transferred to the acceptor end of tRNA(Thr). Also edits incorrectly charged L-seryl-tRNA(Thr). The chain is Threonine--tRNA ligase from Shewanella sp. (strain W3-18-1).